The sequence spans 221 residues: Orotidine 5'-phosphate decarboxylase (221 aa).

Residues D12, K34, 60–69, S117, 170–180, G193, and R194 each bind substrate; these read DFKVADIPNT and PGVGAQGGKAS. The active-site Proton donor is K62.

This sequence belongs to the OMP decarboxylase family. Type 1 subfamily. In terms of assembly, homodimer.

The enzyme catalyses orotidine 5'-phosphate + H(+) = UMP + CO2. The protein operates within pyrimidine metabolism; UMP biosynthesis via de novo pathway; UMP from orotate: step 2/2. Its function is as follows. Catalyzes the decarboxylation of orotidine 5'-monophosphate (OMP) to uridine 5'-monophosphate (UMP). This chain is Orotidine 5'-phosphate decarboxylase, found in Methanosarcina barkeri (strain Fusaro / DSM 804).